The primary structure comprises 469 residues: Protein DETOXIFICATION 18 (469 aa).

The next 12 helical transmembrane spans lie at 40 to 60, 73 to 93, 121 to 141, 152 to 172, 183 to 203, 206 to 226, 252 to 274, 293 to 313, 344 to 364, 374 to 394, 406 to 426, and 438 to 458; these read LPMI…VMFA, LANS…SGAL, LVFT…FLLL, ALYM…QNIL, PLVL…YALV, AGLG…IAFV, HVVL…YWAF, LVAI…GLSA, VLAL…VGLF, FASL…QGVL, LATV…SVLC, and WIGL…MTIF.

This sequence belongs to the multi antimicrobial extrusion (MATE) (TC 2.A.66.1) family.

The protein localises to the membrane. This Arabidopsis thaliana (Mouse-ear cress) protein is Protein DETOXIFICATION 18.